The primary structure comprises 1023 residues: Hemolysin, chromosomal (1023 aa).

Transmembrane regions (helical) follow at residues 237 to 259 (IGAG…ILSN), 267 to 326 (KAAA…LSIA), and 364 to 410 (DASL…GILE). 2 N6-myristoyl lysine lipidation sites follow: Lys563 and Lys689. Hemolysin-type calcium-binding repeat units follow at residues 731–748 (FGSK…DDHI), 749–766 (EGND…NDTL), 767–784 (SGGN…NDKL), 785–802 (IGGA…DDEL), 815–832 (SGGK…ADLL), and 833–850 (DGGE…NDIY). The span at 747–763 (HIEGNDGNDRLYGDKGN) shows a compositional bias: basic and acidic residues. A disordered region spans residues 747 to 780 (HIEGNDGNDRLYGDKGNDTLSGGNGDDQLYGGDG).

It belongs to the RTX prokaryotic toxin (TC 1.C.11) family. In terms of processing, myristoylated by HlyC; the toxin only becomes active when modified. Mainly myristoylated, while a minor fraction is acylated with pentadecanoyl (C15:0; 26%) and heptadecanoyl (C17:0; 6%) fatty acyl groups. Fatty acylation is involved in binding to host membranes and promotes the irreversible insertion of Hemolysin into the host cell membrane. Can be activated by both myristoylation and palmitoylation, but HlyC catalyzes lysine myristoylation.

The protein resides in the secreted. The protein localises to the host cell membrane. Its function is as follows. Bacterial hemolysins are exotoxins that attack blood cell membranes and cause cell rupture by forming a pore. This Escherichia coli protein is Hemolysin, chromosomal.